Consider the following 613-residue polypeptide: MEAVIKAVLTGYPGETSKKDSKKKPPATSKKDPEKTPLLPTRVNYILIIGVLVLCEVTGVRADVHLLEQPGNLWITWASRTGQTDFCLSTQSATSPFQTCLIGIPSPISEGDFKGYVSDNCTTLEPHRLVSRGIPGGPENSTTLTYQKVSCLLLKLNVSLLDEPSELQLLGSQSLPNITNITRIPSVAGGCIGFTPYDSPAGVYGWDRREVTHILLTDPGNNPFFDKASNSSKPFTVVTADRHNLFMGSEYCGAYGYRFWEMYNCSQMRQNWSICQDVWGRGPPENWCTSTGGTWVNQSKEFNETEPFSFTVNCTGSNLGNVSGCCGEPITILPPEAWVDSTQGSFTKPKALPPAIFLICGDRAWQGIPSRPVGGPCYLGKLTMLAPNHTDILKILANSSRTGIRRKRSVSHLDDTCSDEVQLWGPTARIFASILAPGVAAAQALKEIERLACWSVKQANLTTSLLGDLLDDVTSIRHAVLQNRAAIDFLLLAHGHGCEDVAGMCCFNLSDHSESIQKKFQLMKEHVNKIGVDSDPIGSWLRGLFGGIGEWAVHLLKGLLLGLVVILLLVVCLPCLLQIVCGNIRKMINNSISYHTEYKKLQKAYGQPESRIV.

The signal sequence occupies residues 1–62; sequence MEAVIKAVLT…VLCEVTGVRA (62 aa). A disordered region spans residues 14-36; the sequence is GETSKKDSKKKPPATSKKDPEKT. The Extracellular segment spans residues 63-559; that stretch reads DVHLLEQPGN…EWAVHLLKGL (497 aa). 7 disulfide bridges follow: cysteine 87–cysteine 506, cysteine 121–cysteine 151, cysteine 191–cysteine 252, cysteine 265–cysteine 275, cysteine 360–cysteine 377, cysteine 417–cysteine 453, and cysteine 498–cysteine 505. N-linked (GlcNAc...) asparagine; by host glycosylation is found at asparagine 120, asparagine 140, asparagine 157, asparagine 177, asparagine 230, asparagine 264, asparagine 271, asparagine 297, asparagine 303, asparagine 313, and asparagine 321. The segment at 184–233 is binding to host receptor; sequence IPSVAGGCIGFTPYDSPAGVYGWDRREVTHILLTDPGNNPFFDKASNSSK. Residues 268–294 are binding to host receptor; sequence MRQNWSICQDVWGRGPPENWCTSTGGT. N-linked (GlcNAc...) asparagine; by host glycosylation is found at asparagine 388 and asparagine 398. Residues 425–445 are fusion peptide; that stretch reads GPTARIFASILAPGVAAAQAL. A glycan (N-linked (GlcNAc...) asparagine; by host) is linked at asparagine 460. Residues 481-497 form an immunosuppression region; it reads LQNRAAIDFLLLAHGHG. N-linked (GlcNAc...) asparagine; by host glycosylation is present at asparagine 508. A helical transmembrane segment spans residues 560–580; sequence LLGLVVILLLVVCLPCLLQIV. Residues cysteine 572 and cysteine 575 are each lipidated (S-palmitoyl cysteine; by host). Topologically, residues 581-613 are extracellular; it reads CGNIRKMINNSISYHTEYKKLQKAYGQPESRIV. Residue asparagine 589 is glycosylated (N-linked (GlcNAc...) asparagine; by host).

This sequence belongs to the Alpharetroviruses envelope glycoprotein family. As to quaternary structure, heterodimer with the transmembrane protein. The mature envelope protein (Env) consists of a trimer of SU-TM heterodimers attached by a labile interchain disulfide bond. Interacts with the host cell entry receptor TVB-S3; this interaction allows the viral attachment. Heterodimer with the surface protein. The mature envelope protein (Env) consists of a trimer of SU-TM heterodimers attached by a labile interchain disulfide bond. Specific enzymatic cleavages in vivo yield mature proteins. Envelope glycoproteins are synthesized as an inactive precursor that is N-glycosylated and processed likely by host cell furin or by a furin-like protease in the Golgi to yield the mature SU and TM proteins. The cleavage site between SU and TM requires the minimal sequence [KR]-X-[KR]-R. In terms of processing, the transmembrane protein is palmitoylated. Palmitoylation is necessary for glycoprotein function and infectivity.

The protein localises to the virion membrane. It is found in the host cell membrane. The surface protein (SU) attaches the virus to the host cell entry receptor TVB-S3/CAR1. This interaction triggers the refolding of the transmembrane protein (TM) thereby unmasking its fusion peptide and the formation of a reactive thiolate on Cys-100 to activate its fusogenic potential. Fusion occurs at the host cell plasma membrane. Its function is as follows. The transmembrane protein (TM) acts as a class I viral fusion protein. Under the current model, the protein has at least 3 conformational states: pre-fusion native state, pre-hairpin intermediate state, and post-fusion hairpin state. During viral and target cell membrane fusion, the coiled coil regions (heptad repeats) assume a trimer-of-hairpins structure, positioning the fusion peptide in close proximity to the C-terminal region of the ectodomain. The formation of this structure appears to drive apposition and subsequent fusion of viral and target cell membranes. Membranes fusion leads to delivery of the nucleocapsid into the cytoplasm. The polypeptide is Envelope glycoprotein gp95 (env) (Rous sarcoma virus subgroup B (strain Schmidt-Ruppin) (RSV-SR-B)).